A 410-amino-acid polypeptide reads, in one-letter code: Multifunctional CCA protein (410 aa).

ATP is bound by residues Gly-8 and Arg-11. Residues Gly-8 and Arg-11 each coordinate CTP. The Mg(2+) site is built by Asp-21 and Asp-23. Positions 91, 137, and 140 each coordinate ATP. Positions 91, 137, and 140 each coordinate CTP. Residues 228 to 329 enclose the HD domain; sequence TGVHVLSVLQ…LELLQSFDVY (102 aa).

It belongs to the tRNA nucleotidyltransferase/poly(A) polymerase family. Bacterial CCA-adding enzyme type 1 subfamily. Monomer. Can also form homodimers and oligomers. Requires Mg(2+) as cofactor. Ni(2+) is required as a cofactor.

The catalysed reaction is a tRNA precursor + 2 CTP + ATP = a tRNA with a 3' CCA end + 3 diphosphate. The enzyme catalyses a tRNA with a 3' CCA end + 2 CTP + ATP = a tRNA with a 3' CCACCA end + 3 diphosphate. Its function is as follows. Catalyzes the addition and repair of the essential 3'-terminal CCA sequence in tRNAs without using a nucleic acid template. Adds these three nucleotides in the order of C, C, and A to the tRNA nucleotide-73, using CTP and ATP as substrates and producing inorganic pyrophosphate. tRNA 3'-terminal CCA addition is required both for tRNA processing and repair. Also involved in tRNA surveillance by mediating tandem CCA addition to generate a CCACCA at the 3' terminus of unstable tRNAs. While stable tRNAs receive only 3'-terminal CCA, unstable tRNAs are marked with CCACCA and rapidly degraded. The sequence is that of Multifunctional CCA protein from Pseudomonas aeruginosa (strain ATCC 15692 / DSM 22644 / CIP 104116 / JCM 14847 / LMG 12228 / 1C / PRS 101 / PAO1).